We begin with the raw amino-acid sequence, 328 residues long: MATSALYACTKCNQRFPFEELSQGQQLCKECRIAHPIVKCTYCRSEFQQESKTNTICKKCAQNVKQFGTPKPCQYCNIIAAFIGTKCQRCTNSEKKYGPPQTCEQCKQQCAFDRKDEGRRKVDGKLLCWLCTLSYRRVLQKTKEQRKGLGSSHSNSSSLSEKEHQRHHHHHQHHRHGSSHHKISGNLSPEQDQGLWKQSIQKETPKKKPKLETKPSNGDSSSITQSMDSGGTDNFILISQLKEEVMSLKRMLQQRDQTILEKDRKLTELKADFQYQESNMRVKMNNMEKAHKEAMEQQQAKNRELLKQVAALSKGKKFDRSGSSLLLP.

The tract at residues 143–232 (KEQRKGLGSS…ITQSMDSGGT (90 aa)) is disordered. Over residues 148–159 (GLGSSHSNSSSL) the composition is skewed to low complexity. A compositionally biased stretch (basic residues) spans 165–183 (QRHHHHHQHHRHGSSHHKI). Polar residues predominate over residues 185–201 (GNLSPEQDQGLWKQSIQ). Residue S188 is modified to Phosphoserine. The span at 203–213 (ETPKKKPKLET) shows a compositional bias: basic and acidic residues. Residues 216–232 (SNGDSSSITQSMDSGGT) show a composition bias toward polar residues. The stretch at 237–316 (LISQLKEEVM…KQVAALSKGK (80 aa)) forms a coiled coil.

The protein belongs to the FAM76 family. As to expression, highly expressed in hematopoietic and immune systems including in the thymus, spleen, kidney, and blood vessel.

In terms of biological role, plays a role in hematopoiesis and immune system development, and participates in the inflammatory response. The protein is Protein FAM76B (fam76b) of Danio rerio (Zebrafish).